Consider the following 307-residue polypeptide: Ornithine carbamoyltransferase (307 aa).

Residues 53–56 (STRT), Gln80, Arg104, and 131–134 (HPCQ) contribute to the carbamoyl phosphate site. L-ornithine-binding positions include Asn162, Asp219, and 223-224 (SM). Carbamoyl phosphate is bound by residues 259-260 (CL) and Arg287.

The protein belongs to the aspartate/ornithine carbamoyltransferase superfamily. OTCase family.

Its subcellular location is the cytoplasm. The catalysed reaction is carbamoyl phosphate + L-ornithine = L-citrulline + phosphate + H(+). It participates in amino-acid biosynthesis; L-arginine biosynthesis; L-arginine from L-ornithine and carbamoyl phosphate: step 1/3. Reversibly catalyzes the transfer of the carbamoyl group from carbamoyl phosphate (CP) to the N(epsilon) atom of ornithine (ORN) to produce L-citrulline. This is Ornithine carbamoyltransferase from Psychrobacter arcticus (strain DSM 17307 / VKM B-2377 / 273-4).